The primary structure comprises 137 residues: Histone H2B.3 (137 aa).

A compositionally biased stretch (basic and acidic residues) spans 1-37 (KPAEKKPAEKTPVAEKAPAEKKPKAGKKLPKDAAAGD). The disordered stretch occupies residues 1–45 (KPAEKKPAEKTPVAEKAPAEKKPKAGKKLPKDAAAGDKKKKRSKK). K27 and K28 each carry N6-acetyllysine. A Glycyl lysine isopeptide (Lys-Gly) (interchain with G-Cter in ubiquitin) cross-link involves residue K133.

This sequence belongs to the histone H2B family. As to quaternary structure, the nucleosome is a histone octamer containing two molecules each of H2A, H2B, H3 and H4 assembled in one H3-H4 heterotetramer and two H2A-H2B heterodimers. The octamer wraps approximately 147 bp of DNA. Can be acetylated to formH2BK33ac and H2BK34ac. Post-translationally, monoubiquitinated to form H2BK143ub1; may give a specific tag for epigenetic transcriptional activation. Ubiquitous. Highest level in shoots, fruits and young flower buds, including petals, anthers and ovules.

It localises to the nucleus. The protein resides in the chromosome. Core component of nucleosome. Nucleosomes wrap and compact DNA into chromatin, limiting DNA accessibility to the cellular machineries which require DNA as a template. Histones thereby play a central role in transcription regulation, DNA repair, DNA replication and chromosomal stability. DNA accessibility is regulated via a complex set of post-translational modifications of histones, also called histone code, and nucleosome remodeling. The protein is Histone H2B.3 (H2B-3) of Solanum lycopersicum (Tomato).